A 412-amino-acid chain; its full sequence is MSIERAMDILRKYPLCNHCLGRLFARLGTGLDNEERGRAIKDYLLMRIHERILNEGLSDELLNDVKALAVSGHEPSIKFLSNMGINVSPARCYVCGDTIFNRLNEWVNNIVNSLRSLGIEFRSFRLGSRVPLDIQNRELSITTEFNISSAESIKREINRELGKRVSAMLGVSFNREEPDVEVVIDVNTGSVEVQIMPIYISARYRKVHRLINEEGQVKWPIDRVIQAYNAQDVVIHTGGEDPMGVRVLGNGRPVILQVVKPSKRPDVNDVYALLKDSGYDIVLDNLSRVRASAVVKMKARVRDYVITYRVLAITDNSVTNENIKSLHDYFRNRQVVQVFRRGRRIRRRISMVYELDGRVIRDRLVEFLIRCQGNLYIRGFVHGGLGDVEPSIAGTLGFSVRPVEIDILNISD.

In terms of domain architecture, THUMP spans 73–197 (HEPSIKFLSN…TGSVEVQIMP (125 aa)). Tyr-308 and Tyr-376 together coordinate substrate.

It belongs to the pseudouridine synthase Pus10 family.

The enzyme catalyses uridine(54) in tRNA = pseudouridine(54) in tRNA. It catalyses the reaction uridine(55) in tRNA = pseudouridine(55) in tRNA. Responsible for synthesis of pseudouridine from uracil-54 and uracil-55 in the psi GC loop of transfer RNAs. In Vulcanisaeta distributa (strain DSM 14429 / JCM 11212 / NBRC 100878 / IC-017), this protein is tRNA pseudouridine synthase Pus10.